The primary structure comprises 258 residues: Imidazole glycerol phosphate synthase subunit HisF (258 aa).

Active-site residues include Asp11 and Asp130.

This sequence belongs to the HisA/HisF family. As to quaternary structure, heterodimer of HisH and HisF.

It is found in the cytoplasm. The catalysed reaction is 5-[(5-phospho-1-deoxy-D-ribulos-1-ylimino)methylamino]-1-(5-phospho-beta-D-ribosyl)imidazole-4-carboxamide + L-glutamine = D-erythro-1-(imidazol-4-yl)glycerol 3-phosphate + 5-amino-1-(5-phospho-beta-D-ribosyl)imidazole-4-carboxamide + L-glutamate + H(+). The protein operates within amino-acid biosynthesis; L-histidine biosynthesis; L-histidine from 5-phospho-alpha-D-ribose 1-diphosphate: step 5/9. Its function is as follows. IGPS catalyzes the conversion of PRFAR and glutamine to IGP, AICAR and glutamate. The HisF subunit catalyzes the cyclization activity that produces IGP and AICAR from PRFAR using the ammonia provided by the HisH subunit. The sequence is that of Imidazole glycerol phosphate synthase subunit HisF from Cronobacter sakazakii (strain ATCC BAA-894) (Enterobacter sakazakii).